Consider the following 78-residue polypeptide: MKSATLLALSFLLIALYFLICEAEHSRYEEHEILEENMGDVVNLEQRSCAKPGEMCMRIKCCDGQCGCNRGTGRCFCK.

An N-terminal signal peptide occupies residues methionine 1 to alanine 23. Positions glutamate 24–arginine 47 are excised as a propeptide. 3 disulfides stabilise this stretch: cysteine 49–cysteine 62, cysteine 56–cysteine 66, and cysteine 61–cysteine 77.

Belongs to the hainantoxin family. 20 subfamily. As to expression, expressed by the venom gland.

The protein resides in the secreted. Putative ion channel inhibitor. The chain is Hainantoxin-XX from Cyriopagopus hainanus (Chinese bird spider).